Here is a 230-residue protein sequence, read N- to C-terminus: Cytochrome c-552 (230 aa).

The first 47 residues, 1–47 (MTTYLSQDRLRNKENDTMTYQHSKMYQSRTFLLFSALLLVAGQASAA), serve as a signal peptide directing secretion. 6 residues coordinate heme c: Cys-63, Cys-66, His-67, Cys-166, Cys-169, and His-170.

Post-translationally, binds 2 heme c groups covalently per subunit.

It is found in the periplasm. Functionally, diheme, high potential cytochrome c. This chain is Cytochrome c-552 (cyc1), found in Acidithiobacillus ferridurans.